A 734-amino-acid polypeptide reads, in one-letter code: MALRFPSFSQGLAQDPTTRRIWFGIATAHDFESHDDITEERLYQNIFASHFGQLAIIFLWTSGNLFHVAWQGNFETWVQDPLHVRPIAHAIWDPHFGQPAVEAFTRGGALGPVNIAYSGVYQWWYTIGLRTNGDLYTGAIFLLILSTISLIAGWLHLQPKWKPSVSWFKNAESRLNHHLSGLFGVSSLAWTGHLVHVAIPGSRGEYVRWNNLLGILPHPEGLGPFFTGQWNLYAQNPDSNNHIFGTPQGAGTAILTLLGGFHPQTQSLWLTDIAHHHLAIAFIFLVAGHMYRTNFGIGHSIKDLLEVHTPPGGRLGRGHKGLYDTINNSIHFQLGLALASLGVITSLVAQHMYSLPAYAFIAQDFTTQAALYTHHQYIAGFIMTGAFAHGAIFFIRDYNPEQNKDNVLARMLDHKEAIISHLSWASLFLGFHTLGLYVHNDVMLAFGTPEKQILIEPIFAQWIQSAHGKTSYGFDILLSSTNSPAFNAGRSIWLPGWLNAVNENSNSLFLTIGPGDFLVHHAIALGLHTTTLILVKGALDARGSKLMPDKKDFGYSFPCDGPGRGGTCDISAWDAFYLAVFWMLNTIGWVTFYWHWKHITLWQGNISQFNESSTYLMGWLRDYLWLNSSQLINGYNPFGMNSLSVWAWMFLFGHLVWATGFMFLISWRGYWQELIETLAWAHERTPLANLIRWRDKPVALSIVQARLVGLAHFSVGYIFTYAAFLIASTSGKFG.

Transmembrane regions (helical) follow at residues isoleucine 46–alanine 69, leucine 135–glutamine 158, leucine 175–isoleucine 199, isoleucine 273–tyrosine 291, isoleucine 330–tyrosine 353, alanine 369–isoleucine 395, alanine 417–histidine 439, and phenylalanine 517–valine 535. Residues cysteine 559 and cysteine 568 each contribute to the [4Fe-4S] cluster site. A run of 2 helical transmembrane segments spans residues alanine 575–tryptophan 596 and leucine 643–isoleucine 665. Chlorophyll a is bound by residues histidine 654, methionine 662, and tyrosine 670. Tryptophan 671 lines the phylloquinone pocket. Residues leucine 707–alanine 727 form a helical membrane-spanning segment.

This sequence belongs to the PsaA/PsaB family. As to quaternary structure, the PsaA/B heterodimer binds the P700 chlorophyll special pair and subsequent electron acceptors. PSI consists of a core antenna complex that captures photons, and an electron transfer chain that converts photonic excitation into a charge separation. The eukaryotic PSI reaction center is composed of at least 11 subunits. P700 is a chlorophyll a/chlorophyll a' dimer, A0 is one or more chlorophyll a, A1 is one or both phylloquinones and FX is a shared 4Fe-4S iron-sulfur center. serves as cofactor.

The protein localises to the plastid. It localises to the chloroplast thylakoid membrane. The enzyme catalyses reduced [plastocyanin] + hnu + oxidized [2Fe-2S]-[ferredoxin] = oxidized [plastocyanin] + reduced [2Fe-2S]-[ferredoxin]. PsaA and PsaB bind P700, the primary electron donor of photosystem I (PSI), as well as the electron acceptors A0, A1 and FX. PSI is a plastocyanin-ferredoxin oxidoreductase, converting photonic excitation into a charge separation, which transfers an electron from the donor P700 chlorophyll pair to the spectroscopically characterized acceptors A0, A1, FX, FA and FB in turn. Oxidized P700 is reduced on the lumenal side of the thylakoid membrane by plastocyanin. In Phaseolus vulgaris (Kidney bean), this protein is Photosystem I P700 chlorophyll a apoprotein A2.